Consider the following 184-residue polypeptide: Cysteine-rich atrial secretory protein (184 aa).

A signal peptide spans M1–A26. 5 disulfide bridges follow: C29/C34, C65/C111, C75/C82, C123/C155, and C135/C144. A glycan (N-linked (GlcNAc...) asparagine) is linked at N74.

N-glycosylated. As to expression, highly expressed in atrium. Moderately expressed in the pericardium, pulmonary vein, nephridium, arteria anterior, ovotestis and connective tissue. Low expression found in intestine, lung plexus, diaphragm, subesophageal ganglion, ventricle and digestive gland. Very low expression found in columellar retractor, pedal nerves and cerebral ganglion. Not expressed in hemocytes.

Its subcellular location is the secreted. The chain is Cysteine-rich atrial secretory protein from Achatina achatina (Giant Ghana snail).